We begin with the raw amino-acid sequence, 123 residues long: uncharacterized protein (123 aa).

This is an uncharacterized protein from Pasteurella multocida (strain Pm70).